We begin with the raw amino-acid sequence, 170 residues long: Protein SOB FIVE-LIKE 5 (170 aa).

The SOFL-A motif lies at 10–15 (SGWTLY). Residues 17-78 (DQSVSSPSPS…GPRNISEEDS (62 aa)) are disordered. A compositionally biased stretch (basic and acidic residues) spans 35–44 (DSRRRSKDSW). An SOFL-B motif is present at residues 61-70 (SMISDASSGP). The short motif at 79-86 (VKKINIVG) is the Nuclear localization signal element.

This sequence belongs to the SOFL plant protein family. Expressed in seedlings, roots, flowers and siliques. Barely detectable in leaves.

Its subcellular location is the cytoplasm. The protein resides in the nucleus. In terms of biological role, involved in cytokinin-mediated development. This is Protein SOB FIVE-LIKE 5 from Arabidopsis thaliana (Mouse-ear cress).